The following is a 276-amino-acid chain: Putative ripening-related protein 5 (276 aa).

Positions 1–18 are cleaved as a signal peptide; it reads MAMIFLLAALSTTHLASS.

This sequence belongs to the kiwellin family.

It is found in the secreted. The chain is Putative ripening-related protein 5 from Oryza sativa subsp. japonica (Rice).